We begin with the raw amino-acid sequence, 312 residues long: tRNA dimethylallyltransferase (312 aa).

ATP is bound at residue 10-17 (GPTAVGKT). 12 to 17 (TAVGKT) is a binding site for substrate. An interaction with substrate tRNA region spans residues 35–38 (DSMQ).

Belongs to the IPP transferase family. As to quaternary structure, monomer. Mg(2+) is required as a cofactor.

It catalyses the reaction adenosine(37) in tRNA + dimethylallyl diphosphate = N(6)-dimethylallyladenosine(37) in tRNA + diphosphate. In terms of biological role, catalyzes the transfer of a dimethylallyl group onto the adenine at position 37 in tRNAs that read codons beginning with uridine, leading to the formation of N6-(dimethylallyl)adenosine (i(6)A). The sequence is that of tRNA dimethylallyltransferase from Alkaliphilus metalliredigens (strain QYMF).